Consider the following 969-residue polypeptide: Lateral signaling target protein 2 homolog (969 aa).

Lysine 87 is covalently cross-linked (Glycyl lysine isopeptide (Lys-Gly) (interchain with G-Cter in ubiquitin)). Disordered regions lie at residues glutamine 290–glutamate 323, serine 336–isoleucine 360, serine 390–aspartate 437, and arginine 715–glutamate 777. A compositionally biased stretch (polar residues) spans proline 295–serine 310. Over residues serine 336 to valine 346 the composition is skewed to basic and acidic residues. The span at threonine 391–proline 402 shows a compositional bias: polar residues. Positions glycine 411–threonine 423 are enriched in low complexity. Residues arginine 715–lysine 729 are compositionally biased toward basic and acidic residues. 2 stretches are compositionally biased toward low complexity: residues serine 732–serine 745 and serine 756–leucine 769. Residues aspartate 899–valine 959 form an FYVE-type zinc finger. The Zn(2+) site is built by cysteine 905, cysteine 908, cysteine 921, cysteine 924, cysteine 929, cysteine 932, cysteine 951, and cysteine 954.

It belongs to the lst-2 family. Post-translationally, monoubiquitination at Lys-87 prevents binding to phosphatidylinositol 3-phosphate (PI3P) and localization to early endosome membranes.

Its subcellular location is the cytoplasm. It is found in the cytosol. The protein localises to the early endosome membrane. Its function is as follows. Negative regulator of epidermal growth factor receptor (EGFR) signaling. Acts by promoting EGFR degradation in endosomes when not monoubiquitinated. This chain is Lateral signaling target protein 2 homolog (zfyve28), found in Danio rerio (Zebrafish).